A 338-amino-acid chain; its full sequence is Methionine import ATP-binding protein MetN 2 (338 aa).

The ABC transporter domain maps to 2–242; that stretch reads IEIEKVCVDF…PQHAFTQQLV (241 aa). Position 39 to 46 (39 to 46) interacts with ATP; sequence GTSGAGKS.

The protein belongs to the ABC transporter superfamily. Methionine importer (TC 3.A.1.24) family. In terms of assembly, the complex is composed of two ATP-binding proteins (MetN), two transmembrane proteins (MetI) and a solute-binding protein (MetQ).

It localises to the cell inner membrane. It catalyses the reaction L-methionine(out) + ATP + H2O = L-methionine(in) + ADP + phosphate + H(+). The enzyme catalyses D-methionine(out) + ATP + H2O = D-methionine(in) + ADP + phosphate + H(+). In terms of biological role, part of the ABC transporter complex MetNIQ involved in methionine import. Responsible for energy coupling to the transport system. The sequence is that of Methionine import ATP-binding protein MetN 2 from Salmonella typhi.